We begin with the raw amino-acid sequence, 319 residues long: Aspartate carbamoyltransferase catalytic subunit (319 aa).

Positions 65 and 66 each coordinate carbamoyl phosphate. L-aspartate is bound at residue Lys-93. Residues Arg-115, His-149, and Gln-152 each contribute to the carbamoyl phosphate site. Residues Arg-182 and Arg-237 each contribute to the L-aspartate site. Carbamoyl phosphate contacts are provided by Gly-278 and Pro-279.

It belongs to the aspartate/ornithine carbamoyltransferase superfamily. ATCase family. In terms of assembly, heterododecamer (2C3:3R2) of six catalytic PyrB chains organized as two trimers (C3), and six regulatory PyrI chains organized as three dimers (R2).

The catalysed reaction is carbamoyl phosphate + L-aspartate = N-carbamoyl-L-aspartate + phosphate + H(+). Its pathway is pyrimidine metabolism; UMP biosynthesis via de novo pathway; (S)-dihydroorotate from bicarbonate: step 2/3. Its function is as follows. Catalyzes the condensation of carbamoyl phosphate and aspartate to form carbamoyl aspartate and inorganic phosphate, the committed step in the de novo pyrimidine nucleotide biosynthesis pathway. The protein is Aspartate carbamoyltransferase catalytic subunit of Janthinobacterium sp. (strain Marseille) (Minibacterium massiliensis).